A 400-amino-acid polypeptide reads, in one-letter code: Argininosuccinate synthase (400 aa).

8–16 (AYSGGLDTS) is a binding site for ATP. An L-citrulline-binding site is contributed by Tyr-85. Gly-115 serves as a coordination point for ATP. L-aspartate-binding residues include Thr-117, Asn-121, and Asp-122. Asn-121 contacts L-citrulline. Arg-125, Ser-173, Glu-258, and Tyr-270 together coordinate L-citrulline.

Belongs to the argininosuccinate synthase family. Type 1 subfamily. As to quaternary structure, homotetramer.

The protein resides in the cytoplasm. It carries out the reaction L-citrulline + L-aspartate + ATP = 2-(N(omega)-L-arginino)succinate + AMP + diphosphate + H(+). It functions in the pathway amino-acid biosynthesis; L-arginine biosynthesis; L-arginine from L-ornithine and carbamoyl phosphate: step 2/3. The protein is Argininosuccinate synthase of Staphylococcus haemolyticus (strain JCSC1435).